Consider the following 148-residue polypeptide: Histone H2B.1 (148 aa).

Residues 1–35 (MAPRAEKKPAEKKTAAERPVEENKAAEKAPAEKKP) show a composition bias toward basic and acidic residues. A disordered region spans residues 1-56 (MAPRAEKKPAEKKTAAERPVEENKAAEKAPAEKKPKAGKKLPPKEAGDKKKKRSKK). Residue Ala-2 is modified to N,N,N-trimethylalanine; alternate. Ala-2 is subject to N,N-dimethylalanine; alternate. Ala-2 carries the post-translational modification N-methylalanine; alternate. The residue at position 7 (Lys-7) is an N6-acetyllysine; partial. Residue Lys-12 is modified to N6-acetyllysine. Lys-13 is modified (N6,N6-dimethyllysine). Lys-28, Lys-33, and Lys-39 each carry N6-acetyllysine. Lys-40 is modified (N6-acetyllysine; partial). Lys-144 is covalently cross-linked (Glycyl lysine isopeptide (Lys-Gly) (interchain with G-Cter in ubiquitin)).

It belongs to the histone H2B family. As to quaternary structure, the nucleosome is a histone octamer containing two molecules each of H2A, H2B, H3 and H4 assembled in one H3-H4 heterotetramer and two H2A-H2B heterodimers. The octamer wraps approximately 147 bp of DNA. Interacts with AHL27. In terms of processing, can be acetylated to form H2BK6ac, H2BK33ac and H2BK34ac. Post-translationally, mono-, di- or trimethylated at the N-terminus to form H2BA1me1/2/3. H2BA1me2 may be acetylated to form H2BA1me2K6ac. Monoubiquitinated by BRE1 to form H2BK143ub1 and deubiquitinated by UBP26. Required for heterochromatic histone H3 di- and trimethylation at H3K4me. May give a specific tag for epigenetic transcriptional activation.

It is found in the nucleus. The protein resides in the chromosome. In terms of biological role, core component of nucleosome. Nucleosomes wrap and compact DNA into chromatin, limiting DNA accessibility to the cellular machineries which require DNA as a template. Histones thereby play a central role in transcription regulation, DNA repair, DNA replication and chromosomal stability. DNA accessibility is regulated via a complex set of post-translational modifications of histones, also called histone code, and nucleosome remodeling. The protein is Histone H2B.1 of Arabidopsis thaliana (Mouse-ear cress).